The primary structure comprises 334 residues: uncharacterized protein (334 aa).

The protein belongs to the MG414/MG415 family.

This is an uncharacterized protein from Mycoplasma pneumoniae (strain ATCC 29342 / M129 / Subtype 1) (Mycoplasmoides pneumoniae).